The chain runs to 396 residues: Elongation factor Tu (396 aa).

Residues 10–206 form the tr-type G domain; sequence KPHCNIGTIG…AVDAYIPQPE (197 aa). The tract at residues 19-26 is G1; sequence GHVDHGKT. 19-26 serves as a coordination point for GTP; the sequence is GHVDHGKT. A Mg(2+)-binding site is contributed by T26. The tract at residues 60–64 is G2; that stretch reads GITIS. The segment at 81–84 is G3; sequence DCPG. Residues 81–85 and 136–139 contribute to the GTP site; these read DCPGH and NKCD. Residues 136–139 are G4; sequence NKCD. Residues 174-176 are G5; it reads SAL.

Belongs to the TRAFAC class translation factor GTPase superfamily. Classic translation factor GTPase family. EF-Tu/EF-1A subfamily. As to quaternary structure, monomer.

It is found in the cytoplasm. The enzyme catalyses GTP + H2O = GDP + phosphate + H(+). GTP hydrolase that promotes the GTP-dependent binding of aminoacyl-tRNA to the A-site of ribosomes during protein biosynthesis. The protein is Elongation factor Tu of Nitrobacter winogradskyi (strain ATCC 25391 / DSM 10237 / CIP 104748 / NCIMB 11846 / Nb-255).